The following is a 158-amino-acid chain: Cysteine proteinase inhibitor 4 (158 aa).

An N-terminal signal peptide occupies residues 1–24 (MAARCPVGVASVLLLIVLVTVASA). The disordered stretch occupies residues 26-51 (SGARSGGGGGGGIRELRGGGAGRRVG). Over residues 29 to 49 (RSGGGGGGGIRELRGGGAGRR) the composition is skewed to gly residues. Residues 51–116 (GGRTEVRDVE…KYYLRVAAAE (66 aa)) enclose the Cystatin domain. The Secondary area of contact signature appears at 101–105 (QVVSG).

The protein belongs to the cystatin family. Phytocystatin subfamily.

It is found in the secreted. Specific inhibitor of cysteine proteinases. Probably involved in the regulation of endogenous processes and in defense against pests and pathogens. The protein is Cysteine proteinase inhibitor 4 of Oryza sativa subsp. japonica (Rice).